Here is a 103-residue protein sequence, read N- to C-terminus: NADH-quinone oxidoreductase subunit K (103 aa).

3 consecutive transmembrane segments (helical) span residues 6–26 (LSHFLILGAILFAISVVGIFL), 32–52 (LVLLMAIELMLLAVNMNFVAF), and 63–83 (IFVFFILTVAAAESAIGLAIL).

It belongs to the complex I subunit 4L family. In terms of assembly, NDH-1 is composed of 14 different subunits. Subunits NuoA, H, J, K, L, M, N constitute the membrane sector of the complex.

Its subcellular location is the cell inner membrane. The enzyme catalyses a quinone + NADH + 5 H(+)(in) = a quinol + NAD(+) + 4 H(+)(out). Functionally, NDH-1 shuttles electrons from NADH, via FMN and iron-sulfur (Fe-S) centers, to quinones in the respiratory chain. The immediate electron acceptor for the enzyme in this species is believed to be ubiquinone. Couples the redox reaction to proton translocation (for every two electrons transferred, four hydrogen ions are translocated across the cytoplasmic membrane), and thus conserves the redox energy in a proton gradient. The polypeptide is NADH-quinone oxidoreductase subunit K (Dechloromonas aromatica (strain RCB)).